The sequence spans 296 residues: 4-hydroxybenzoate octaprenyltransferase (296 aa).

The next 8 helical transmembrane spans lie at 23 to 43 (IGIL…SPGW), 46 to 66 (GLVL…GCVM), 99 to 119 (LALA…PLVV), 141 to 161 (IPQA…FAAI), 163 to 183 (GQLP…AIAY), 211 to 231 (DVFA…WVGV), 237 to 257 (WPYF…YALI), and 265 to 285 (CFKA…GVLA).

This sequence belongs to the UbiA prenyltransferase family. The cofactor is Mg(2+).

Its subcellular location is the cell inner membrane. It catalyses the reaction all-trans-octaprenyl diphosphate + 4-hydroxybenzoate = 4-hydroxy-3-(all-trans-octaprenyl)benzoate + diphosphate. Its pathway is cofactor biosynthesis; ubiquinone biosynthesis. Functionally, catalyzes the prenylation of para-hydroxybenzoate (PHB) with an all-trans polyprenyl group. Mediates the second step in the final reaction sequence of ubiquinone-8 (UQ-8) biosynthesis, which is the condensation of the polyisoprenoid side chain with PHB, generating the first membrane-bound Q intermediate 3-octaprenyl-4-hydroxybenzoate. The protein is 4-hydroxybenzoate octaprenyltransferase of Methylobacillus flagellatus (strain ATCC 51484 / DSM 6875 / VKM B-1610 / KT).